The chain runs to 292 residues: MSERLSGHTLLVSLLATPIRHSLSPKMHNEAYAKLGLDYAYLAFEVGTEQLADAVQGIRALGIRGSNVSMPNKEAILPLLDDLSPAAELVGAVNTVVNKDGKGHLVGHITDGIGALRALADEGVSVKNKIITLAGVGGAGKAIAVQLAFDGAKEVRLFNRQATRLSSVQKLVTKLNQLTRTKVTLQDLEDQTAFKEAIRESHLFIDATSVGMKPLENLSLITDPELIRPDLVVFDIVYSPAETKLLAFARQHGAQKVINGLGMVLYQGAEAFKLITGQDMPVDAIKPLLGDE.

Shikimate is bound by residues 22-24 (SLS) and Ser69. The active-site Proton acceptor is Lys73. Shikimate-binding residues include Asn94 and Asp111. NADP(+)-binding positions include 135–139 (GVGGA) and Ile236. Tyr238 is a shikimate binding site. Residue Gly260 participates in NADP(+) binding.

Belongs to the shikimate dehydrogenase family. As to quaternary structure, homodimer.

The catalysed reaction is shikimate + NADP(+) = 3-dehydroshikimate + NADPH + H(+). It functions in the pathway metabolic intermediate biosynthesis; chorismate biosynthesis; chorismate from D-erythrose 4-phosphate and phosphoenolpyruvate: step 4/7. Its function is as follows. Involved in the biosynthesis of the chorismate, which leads to the biosynthesis of aromatic amino acids. Catalyzes the reversible NADPH linked reduction of 3-dehydroshikimate (DHSA) to yield shikimate (SA). This chain is Shikimate dehydrogenase (NADP(+)), found in Streptococcus pyogenes serotype M3 (strain ATCC BAA-595 / MGAS315).